The chain runs to 2273 residues: Linear gramicidin synthase subunit A (2273 aa).

The interval 1–144 is GART; that stretch reads MRILFLTTFM…AIEELFIREW (144 aa). Carrier domains are found at residues 693-767 and 1724-1798; these read APTD…TEQK and APRT…TSEQ. An O-(pantetheine 4'-phosphoryl)serine mark is found at S728 and S1759.

It belongs to the ATP-dependent AMP-binding enzyme family. Large multienzyme complex composed of 4 subunits; LgrA, LgrB, LgrC and LgrD. The cofactor is pantetheine 4'-phosphate.

Activates valine (or leucine, but much less frequently), and then glycine and catalyzes the formation of the peptide bond in the first step of peptide synthesis. This enzyme may also play a role in N-formylation of the first amino acid residue in the synthesized dipeptide. This chain is Linear gramicidin synthase subunit A (lgrA), found in Brevibacillus parabrevis.